A 173-amino-acid chain; its full sequence is Nicotinamide-nucleotide adenylyltransferase (173 aa).

The protein belongs to the archaeal NMN adenylyltransferase family.

It is found in the cytoplasm. The catalysed reaction is beta-nicotinamide D-ribonucleotide + ATP + H(+) = diphosphate + NAD(+). Its pathway is cofactor biosynthesis; NAD(+) biosynthesis; NAD(+) from nicotinamide D-ribonucleotide: step 1/1. The protein is Nicotinamide-nucleotide adenylyltransferase (ffdC) of Methanolobus tindarius.